The following is a 227-amino-acid chain: Cytidylate kinase (227 aa).

10–18 contacts ATP; the sequence is GPASSGKST.

The protein belongs to the cytidylate kinase family. Type 1 subfamily.

It localises to the cytoplasm. The enzyme catalyses CMP + ATP = CDP + ADP. It carries out the reaction dCMP + ATP = dCDP + ADP. This chain is Cytidylate kinase, found in Streptococcus agalactiae serotype V (strain ATCC BAA-611 / 2603 V/R).